A 233-amino-acid polypeptide reads, in one-letter code: Ribosomal RNA small subunit methyltransferase G (233 aa).

S-adenosyl-L-methionine contacts are provided by residues G96, L101, 146–147 (LE), and R160.

The protein belongs to the methyltransferase superfamily. RNA methyltransferase RsmG family.

It is found in the cytoplasm. The enzyme catalyses guanosine(527) in 16S rRNA + S-adenosyl-L-methionine = N(7)-methylguanosine(527) in 16S rRNA + S-adenosyl-L-homocysteine. In terms of biological role, specifically methylates the N7 position of guanine in position 527 of 16S rRNA. The protein is Ribosomal RNA small subunit methyltransferase G of Sphingopyxis alaskensis (strain DSM 13593 / LMG 18877 / RB2256) (Sphingomonas alaskensis).